The following is a 5161-amino-acid chain: Nonribosomal peptide synthetase TES (5161 aa).

The segment at 37-436 (EEQAIARPNA…GRKDSQTKVR (400 aa)) is adenylation 1. In terms of domain architecture, Carrier 1 spans 569–645 (QPETEKEQIL…KLTSAAIPSV (77 aa)). An O-(pantetheine 4'-phosphoryl)serine modification is found at S606. Positions 659–1098 (GHVAQSFAQG…LLCDVELSKL (440 aa)) are condensation 1. The interval 1122–1522 (RQQTSLCPSR…GRMDGQVKIR (401 aa)) is adenylation 2. Residues 1630–1742 (MNEWLDDTID…YLFKTTQQLL (113 aa)) form a methyltransferase (M) domain 1 region. Residues 2068 to 2141 (TRAESKIQQL…QLAAVAQEHV (74 aa)) enclose the Carrier 2 domain. S2102 is subject to O-(pantetheine 4'-phosphoryl)serine. Residues 2179–2593 (EDIYPCSPLQ…MLTQDDEQQL (415 aa)) are condensation 2. The interval 2614–3010 (DQAKSRPEAD…GRKDGQVKVR (397 aa)) is adenylation 3. Residues 3139–3215 (KPETKHEMAL…RLANRLVDPP (77 aa)) enclose the Carrier 3 domain. The residue at position 3176 (S3176) is an O-(pantetheine 4'-phosphoryl)serine. Positions 3232–3668 (LQSFAQGRLW…VVPLMTVEAH (437 aa)) are condensation 3. The tract at residues 3694–4098 (FRQQAAMQPS…GRIDGQVKIR (405 aa)) is adenylation 4. Residues 4203–4329 (EMKEWLEETI…KVDGVKTLFF (127 aa)) form a methyltransferase (M) domain 2 region. Positions 4643–4725 (RELSTAELKV…QFSQHEGEQK (83 aa)) constitute a Carrier 4 domain. At S4680 the chain carries O-(pantetheine 4'-phosphoryl)serine. The interval 4785–5093 (FFLNLGTRVD…HQNLNEHPEF (309 aa)) is condensation 4.

The protein belongs to the NRP synthetase family.

It functions in the pathway phytotoxin biosynthesis. Its function is as follows. Nonribosomal peptide synthetase; part of the gene cluster that mediates the biosynthesis of the phytotoxin tentoxin, an inhibitor the F1-ATPase activity of chloroplasts, resulting in chlorosis in sensitive plants. Tentoxin is a cyclic tetrapeptide that consists of four amino acid residues: glycine (Gly), alanine (Ala), leucine (Leu), and dehydrophenylalanine (DPhe). In addition, both the Ala and DPhe residues are N-methylated. The nonribosomal peptide synthetase TES assembles tentoxin from the four substrate amino acids. The adenylation domains of each of the 4 modules are responsible for the activation of Gly, Ala, Leu and DPhe, respectively. In addition, the N-methyltransferase domains in the second and fourth modules of TES could be responsible for N-methylation of Ala and DPhe residues. Finally, the condensation domain located in the termination module probably catalyzes the formation of the intramolecular macrocyclization and then the release of tentoxin. The cytochrome P450 monooxygenase TES1 is predicted to be involved in the formation of DPhe. The chain is Nonribosomal peptide synthetase TES from Alternaria alternata (Alternaria rot fungus).